The sequence spans 122 residues: Early nodulin-10 (122 aa).

The signal sequence occupies residues 1–36; it reads MTCTLKSPPKMASFFLSSLVLMFIAALILLPQGLAA. 10 repeat units span residues 45 to 49, 51 to 55, 58 to 62, 68 to 72, 77 to 81, 82 to 86, 88 to 92, 99 to 103, 106 to 110, and 113 to 117. The tract at residues 45-117 is 10 X 5 AA approximate repeats of P-P-X-X-X; sequence PPDSELPPYR…FYKQAPPSQK (73 aa). Residues 90–122 form a disordered region; it reads TYKPSKKRLPPPFQKLPPFYKQAPPSQKLPRVN.

Root nodules. In early nodules, expressed only in the interior of the developing nodule with no expression in other nodule tissues, including meristem. In slightly older nodules, expressed in almost all cells of the central zone. In more mature nodules, expression is restricted to the invasion zone.

This is Early nodulin-10 (ENOD10) from Medicago sativa (Alfalfa).